Consider the following 501-residue polypeptide: Raftlin-2 (501 aa).

2 disordered regions span residues 1-20 (MGCG…GKIF) and 196-238 (SWNE…SRKG). A lipid anchor (N-myristoyl glycine) is attached at G2. A lipid anchor (S-palmitoyl cysteine) is attached at C3. The span at 224–233 (MEQNGSPSSS) shows a compositional bias: polar residues. Phosphoserine is present on S405. Residues 407 to 454 (AQTTDKKASRRIKGEDKNKATSRSIGLDTTTPQPAESRHPPEECRLSP) form a disordered region. T409 carries the phosphothreonine modification. The span at 410–425 (TDKKASRRIKGEDKNK) shows a compositional bias: basic and acidic residues. The segment covering 427 to 440 (TSRSIGLDTTTPQP) has biased composition (polar residues). S430 carries the phosphoserine modification. A compositionally biased stretch (basic and acidic residues) spans 442–451 (ESRHPPEECR).

It belongs to the raftlin family.

It localises to the cell membrane. Functionally, upon bacterial lipopolysaccharide stimulation, mediates clathrin-dependent internalization of TLR4 in dendritic cells, resulting in activation of TICAM1-mediated signaling and subsequent IFNB1 production. May regulate B-cell antigen receptor mediated-signaling. This is Raftlin-2 (RFTN2) from Pongo abelii (Sumatran orangutan).